A 362-amino-acid chain; its full sequence is Glutamine synthetase (362 aa).

Residues 26–107 (LIAEYIWIDS…VLSECWNADG (82 aa)) form the GS beta-grasp domain. The GS catalytic domain occupies 114–362 (HRHEAAKLME…METCFGAVSE (249 aa)).

This sequence belongs to the glutamine synthetase family. As to quaternary structure, homooctamer.

Its subcellular location is the cytoplasm. The catalysed reaction is L-glutamate + NH4(+) + ATP = L-glutamine + ADP + phosphate + H(+). The protein is Glutamine synthetase (gln-1) of Neurospora crassa (strain ATCC 24698 / 74-OR23-1A / CBS 708.71 / DSM 1257 / FGSC 987).